The primary structure comprises 245 residues: Small ribosomal subunit protein uS3 (245 aa).

Residues 39–108 (IRNYIKKNYY…SVFVNVQEVK (70 aa)) form the KH type-2 domain.

This sequence belongs to the universal ribosomal protein uS3 family. In terms of assembly, part of the 30S ribosomal subunit. Forms a tight complex with proteins S10 and S14.

Binds the lower part of the 30S subunit head. Binds mRNA in the 70S ribosome, positioning it for translation. In Dictyoglomus turgidum (strain DSM 6724 / Z-1310), this protein is Small ribosomal subunit protein uS3.